The sequence spans 63 residues: Large ribosomal subunit protein bL28A (63 aa).

It belongs to the bacterial ribosomal protein bL28 family.

The sequence is that of Large ribosomal subunit protein bL28A from Nocardia farcinica (strain IFM 10152).